Consider the following 358-residue polypeptide: 3-dehydroquinate synthase (358 aa).

NAD(+) is bound by residues 70–75, 104–108, 128–129, Lys-141, Lys-150, and 168–171; these read DGEQFK, GVIGD, TT, and CLHT. 3 residues coordinate Zn(2+): Glu-183, His-246, and His-263.

It belongs to the sugar phosphate cyclases superfamily. Dehydroquinate synthase family. Co(2+) is required as a cofactor. It depends on Zn(2+) as a cofactor. NAD(+) serves as cofactor.

It localises to the cytoplasm. The enzyme catalyses 7-phospho-2-dehydro-3-deoxy-D-arabino-heptonate = 3-dehydroquinate + phosphate. Its pathway is metabolic intermediate biosynthesis; chorismate biosynthesis; chorismate from D-erythrose 4-phosphate and phosphoenolpyruvate: step 2/7. In terms of biological role, catalyzes the conversion of 3-deoxy-D-arabino-heptulosonate 7-phosphate (DAHP) to dehydroquinate (DHQ). This is 3-dehydroquinate synthase from Shewanella baltica (strain OS155 / ATCC BAA-1091).